The chain runs to 163 residues: Small heat shock protein C1 (163 aa).

One can recognise a sHSP domain in the interval 55–163 (TFYESSSLKS…EQDSREITIN (109 aa)).

It belongs to the small heat shock protein (HSP20) family.

The polypeptide is Small heat shock protein C1 (hspC1) (Rickettsia prowazekii (strain Madrid E)).